We begin with the raw amino-acid sequence, 415 residues long: Putative competence-damage inducible protein (415 aa).

It belongs to the CinA family.

This is Putative competence-damage inducible protein from Listeria innocua serovar 6a (strain ATCC BAA-680 / CLIP 11262).